The sequence spans 417 residues: Phosphoglycerate kinase 1 (417 aa).

Residue serine 2 is modified to N-acetylserine. Phosphoserine is present on residues serine 2 and serine 4. The residue at position 6 (lysine 6) is an N6-succinyllysine. At lysine 11 the chain carries N6-acetyllysine. (2R)-3-phosphoglycerate is bound by residues valine 23, aspartate 24, phenylalanine 25, asparagine 26, glutamine 38, and arginine 39. A mitochondrial targeting region exposed following cis-trans isomerization by PIN1 and recognized by the TOM complex for mitochondrial translocation of the protein region spans residues 38-43 (QRIKAA). Lysine 48 is modified (N6-acetyllysine; alternate). An N6-succinyllysine; alternate modification is found at lysine 48. Residues serine 62, histidine 63, glycine 65, and arginine 66 each contribute to the (2R)-3-phosphoglycerate site. Lysine 75 carries the N6-acetyllysine modification. The residue at position 76 (tyrosine 76) is a Phosphotyrosine. 2 positions are modified to N6-acetyllysine: lysine 86 and lysine 91. Lysine 97 is subject to N6-acetyllysine; alternate. The residue at position 97 (lysine 97) is an N6-(2-hydroxyisobutyryl)lysine; alternate. 2 residues coordinate (2R)-3-phosphoglycerate: leucine 122 and arginine 123. Position 131 is an N6-acetyllysine; alternate (lysine 131). Lysine 131 bears the N6-malonyllysine; alternate mark. Lysine 146 bears the N6-acetyllysine mark. 2 residues coordinate (2R)-3-phosphoglycerate: histidine 170 and arginine 171. Lysine 191 carries the N6-succinyllysine modification. Tyrosine 196 carries the post-translational modification Phosphotyrosine. N6-acetyllysine is present on lysine 199. Serine 203 is subject to Phosphoserine. Glycine 214 contacts ADP. Residue glycine 214 participates in CDP binding. Positions 215 and 216 each coordinate AMP. Alanine 215 is a binding site for ATP. Residue alanine 215 participates in Mg(2+) binding. N6-(2-hydroxyisobutyryl)lysine is present on lysine 216. Mg(2+) contacts are provided by alanine 218 and aspartate 219. Aspartate 219 is a binding site for CDP. Position 220 (lysine 220) interacts with AMP. ATP is bound at residue lysine 220. Residue lysine 220 is modified to N6-(2-hydroxyisobutyryl)lysine. ADP is bound at residue glycine 238. Glycine 238 serves as a coordination point for CDP. Glycine 239 is an AMP binding site. Glycine 239 serves as a coordination point for ATP. N6-acetyllysine occurs at positions 267 and 291. Glycine 313 provides a ligand contact to AMP. Residue glycine 313 participates in ATP binding. Lysine 323 carries the N6-(2-hydroxyisobutyryl)lysine modification. Residues glycine 338, valine 340, and phenylalanine 343 each contribute to the CDP site. Position 343 (phenylalanine 343) interacts with ADP. Position 344 (glutamate 344) interacts with AMP. Position 344 (glutamate 344) interacts with ATP. The residue at position 361 (lysine 361) is an N6-acetyllysine. Positions 375 and 376 each coordinate ATP. Aspartate 375 provides a ligand contact to Mg(2+).

It belongs to the phosphoglycerate kinase family. As to quaternary structure, monomer. Interacts with kinase MAPK1/ERK2; the interaction is direct, occurs under hypoxic conditions, and promotes its interaction with PIN1. Interacts with peptidyl-prolyl cis-trans isomerase PIN1; the interaction is direct, occurs under hypoxic conditions, and targets the protein to the mitochondrion by promoting interactions with the TOM complex. Interacts with mitochondrial circRNA mcPGK1 (via its 2nd stem-loop); the interaction is direct and targets the protein to the mitochondrion by promoting interactions with the TOM complex. Interacts with pyruvate dehydrogenase kinase PDK1; the interaction is direct, occurs under hypoxic conditions and leads to PDK1-mediated inhibition of pyruvate dehydrogenase complex activity. The cofactor is Mg(2+). Phosphorylated at Ser-203 by MAPK1/ERK2 under hypoxic conditions, which promotes its mitochondrial targeting. As to expression, testis, lung, brain, skeletal muscle, liver, intestine, and kidney (at protein level).

The protein resides in the cytoplasm. Its subcellular location is the cytosol. It is found in the mitochondrion matrix. The catalysed reaction is (2R)-3-phosphoglycerate + ATP = (2R)-3-phospho-glyceroyl phosphate + ADP. It catalyses the reaction L-seryl-[protein] + ATP = O-phospho-L-seryl-[protein] + ADP + H(+). It functions in the pathway carbohydrate degradation; glycolysis; pyruvate from D-glyceraldehyde 3-phosphate: step 2/5. Its function is as follows. Catalyzes one of the two ATP producing reactions in the glycolytic pathway via the reversible conversion of 1,3-diphosphoglycerate to 3-phosphoglycerate. Both L- and D- forms of purine and pyrimidine nucleotides can be used as substrates, but the activity is much lower on pyrimidines. In addition to its role as a glycolytic enzyme, it seems that PGK-1 acts as a polymerase alpha cofactor protein (primer recognition protein). Acts as a protein kinase when localized to the mitochondrion where it phosphorylates pyruvate dehydrogenase kinase PDK1 to inhibit pyruvate dehydrogenase complex activity and suppress the formation of acetyl-coenzyme A from pyruvate, and consequently inhibit oxidative phosphorylation and promote glycolysis. May play a role in sperm motility. This chain is Phosphoglycerate kinase 1 (Pgk1), found in Mus musculus (Mouse).